Here is a 303-residue protein sequence, read N- to C-terminus: Esterase (303 aa).

The short motif at 79-81 (HGG) is the Involved in the stabilization of the negatively charged intermediate by the formation of the oxyanion hole element. Active-site residues include serine 149 and glutamate 244.

It belongs to the 'GDXG' lipolytic enzyme family.

It localises to the secreted. The chain is Esterase (est) from Acinetobacter venetianus (strain ATCC 31012 / DSM 23050 / BCRC 14357 / CCUG 45561 / CIP 110063 / KCTC 2702 / LMG 19082 / RAG-1).